The chain runs to 361 residues: UDP-N-acetylglucosamine--N-acetylmuramyl-(pentapeptide) pyrophosphoryl-undecaprenol N-acetylglucosamine transferase (361 aa).

Residues 21 to 23, Asn131, Arg172, Ser195, Ile250, and Gln295 each bind UDP-N-acetyl-alpha-D-glucosamine; that span reads TGG.

It belongs to the glycosyltransferase 28 family. MurG subfamily.

The protein localises to the cell inner membrane. The enzyme catalyses di-trans,octa-cis-undecaprenyl diphospho-N-acetyl-alpha-D-muramoyl-L-alanyl-D-glutamyl-meso-2,6-diaminopimeloyl-D-alanyl-D-alanine + UDP-N-acetyl-alpha-D-glucosamine = di-trans,octa-cis-undecaprenyl diphospho-[N-acetyl-alpha-D-glucosaminyl-(1-&gt;4)]-N-acetyl-alpha-D-muramoyl-L-alanyl-D-glutamyl-meso-2,6-diaminopimeloyl-D-alanyl-D-alanine + UDP + H(+). The protein operates within cell wall biogenesis; peptidoglycan biosynthesis. In terms of biological role, cell wall formation. Catalyzes the transfer of a GlcNAc subunit on undecaprenyl-pyrophosphoryl-MurNAc-pentapeptide (lipid intermediate I) to form undecaprenyl-pyrophosphoryl-MurNAc-(pentapeptide)GlcNAc (lipid intermediate II). This Solibacter usitatus (strain Ellin6076) protein is UDP-N-acetylglucosamine--N-acetylmuramyl-(pentapeptide) pyrophosphoryl-undecaprenol N-acetylglucosamine transferase.